The sequence spans 447 residues: GTPase Der (447 aa).

EngA-type G domains follow at residues 3–167 (PVIA…FAQR) and 181–354 (IRLA…AAAM). Residues 9–16 (GRPNVGKS), 56–60 (DTGGF), 119–122 (NKAE), 187–194 (GRPNVGKS), 234–238 (DTAGI), and 299–302 (NKWD) contribute to the GTP site. Residues 355–439 (SNLSTPKLTR…PLRIELRSGK (85 aa)) form the KH-like domain.

This sequence belongs to the TRAFAC class TrmE-Era-EngA-EngB-Septin-like GTPase superfamily. EngA (Der) GTPase family. Associates with the 50S ribosomal subunit.

In terms of biological role, GTPase that plays an essential role in the late steps of ribosome biogenesis. This chain is GTPase Der, found in Herminiimonas arsenicoxydans.